The primary structure comprises 94 residues: Co-chaperonin GroES (94 aa).

The protein belongs to the GroES chaperonin family. As to quaternary structure, heptamer of 7 subunits arranged in a ring. Interacts with the chaperonin GroEL.

Its subcellular location is the cytoplasm. Functionally, together with the chaperonin GroEL, plays an essential role in assisting protein folding. The GroEL-GroES system forms a nano-cage that allows encapsulation of the non-native substrate proteins and provides a physical environment optimized to promote and accelerate protein folding. GroES binds to the apical surface of the GroEL ring, thereby capping the opening of the GroEL channel. The sequence is that of Co-chaperonin GroES from Brevibacillus choshinensis.